Here is a 192-residue protein sequence, read N- to C-terminus: CASP-like protein 1E1 (192 aa).

Residues Met1 to Glu22 are disordered. Residues Met1 to Ser29 lie on the Cytoplasmic side of the membrane. Residues Phe30–Val50 traverse the membrane as a helical segment. At Asn51–Ala81 the chain is on the extracellular side. Asn52 is a glycosylation site (N-linked (GlcNAc...) asparagine). The chain crosses the membrane as a helical span at residues Phe82–Leu102. Topologically, residues Ser103–Asp118 are cytoplasmic. The chain crosses the membrane as a helical span at residues Leu119–Gly139. Over Tyr140 to Gln161 the chain is Extracellular. The helical transmembrane segment at Val162–Leu182 threads the bilayer. The Cytoplasmic segment spans residues Thr183–Lys192.

It belongs to the Casparian strip membrane proteins (CASP) family. In terms of assembly, homodimer and heterodimers.

The protein localises to the cell membrane. The polypeptide is CASP-like protein 1E1 (Ricinus communis (Castor bean)).